The chain runs to 360 residues: Phenylalanine--tRNA ligase alpha subunit (360 aa).

Glu260 lines the Mg(2+) pocket.

It belongs to the class-II aminoacyl-tRNA synthetase family. Phe-tRNA synthetase alpha subunit type 1 subfamily. Tetramer of two alpha and two beta subunits. It depends on Mg(2+) as a cofactor.

Its subcellular location is the cytoplasm. It catalyses the reaction tRNA(Phe) + L-phenylalanine + ATP = L-phenylalanyl-tRNA(Phe) + AMP + diphosphate + H(+). This Sinorhizobium medicae (strain WSM419) (Ensifer medicae) protein is Phenylalanine--tRNA ligase alpha subunit.